The sequence spans 566 residues: Alpha-N-acetylgalactosaminide alpha-2,6-sialyltransferase 1 (566 aa).

Residues 1–16 lie on the Cytoplasmic side of the membrane; the sequence is MGFLIRRLPKDSRIFR. The helical; Signal-anchor for type II membrane protein transmembrane segment at 17–37 threads the bilayer; it reads WLLILTVFSFIITSFSALFGM. At 38 to 566 the chain is on the lumenal side; the sequence is EKSIFRQLKI…ENIMKLYQRS (529 aa). 2 N-linked (GlcNAc...) asparagine glycosylation sites follow: Asn-66 and Asn-132. A disordered region spans residues 138–161; it reads ASVVERTKEKTTARPVPGVGEADG. Asn-192 is a glycosylation site (N-linked (GlcNAc...) asparagine). Repeat 1 spans residues 247-254; the sequence is SSSPVSTC. The tract at residues 247-337 is 2 X 8 AA repeats of S-S-S-X-V-S-T-C; the sequence is SSSPVSTCSE…ANSSSNVSTC (91 aa). Cystine bridges form between Cys-254–Cys-337 and Cys-340–Cys-508. N-linked (GlcNAc...) asparagine glycans are attached at residues Asn-275, Asn-286, Asn-306, Asn-329, and Asn-333. The stretch at 330–337 is repeat 2; the sequence is SSSNVSTC.

It belongs to the glycosyltransferase 29 family. In terms of tissue distribution, heart, kidney, testes, brain, liver and lung.

It localises to the golgi apparatus membrane. The catalysed reaction is a beta-D-galactosyl-(1-&gt;3)-N-acetyl-alpha-D-galactosaminyl derivative + CMP-N-acetyl-beta-neuraminate = a beta-D-galactosyl-(1-&gt;3)-[N-acetyl-alpha-neuraminyl-(2-&gt;6)]-N-acetyl-alpha-D-galactosaminyl derivative + CMP + H(+). It carries out the reaction a 3-O-[N-acetyl-alpha-D-galactosaminyl]-L-seryl-[protein] + CMP-N-acetyl-beta-neuraminate = a 3-O-[N-acetyl-alpha-neuraminosyl-(2-&gt;6)-N-acetyl-alpha-D-galactosaminyl]-L-seryl-[protein] + CMP + H(+). The enzyme catalyses a 3-O-[N-acetyl-alpha-D-galactosaminyl]-L-threonyl-[protein] + CMP-N-acetyl-beta-neuraminate = a 3-O-[N-acetyl-alpha-neuraminosyl-(2-&gt;6)-N-acetyl-alpha-D-galactosaminyl]-L-threonyl-[protein] + CMP + H(+). It catalyses the reaction a 3-O-[beta-D-galactosyl-(1-&gt;3)-N-acetyl-alpha-D-galactosaminyl]-L-seryl-[protein] + CMP-N-acetyl-beta-neuraminate = a 3-O-{beta-D-galactosyl-(1-&gt;3)-[N-acetyl-alpha-neuraminosyl-(2-&gt;6)]-N-acetyl-alpha-D-galactosaminyl}-L-seryl-[protein] + CMP + H(+). The catalysed reaction is a 3-O-[beta-D-galactosyl-(1-&gt;3)-N-acetyl-alpha-D-galactosaminyl]-L-threonyl-[protein] + CMP-N-acetyl-beta-neuraminate = a 3-O-{beta-D-galactosyl-(1-&gt;3)-[N-acetyl-alpha-neuraminosyl-(2-&gt;6)]-N-acetyl-alpha-D-galactosaminyl}-L-threonyl-[protein] + CMP + H(+). It carries out the reaction a 3-O-[N-acetyl-alpha-neuraminyl-(2-&gt;3)-beta-D-galactosyl-(1-&gt;3)-N-acetyl-alpha-D-galactosaminyl]-L-threonyl-[protein] + CMP-N-acetyl-beta-neuraminate = a 3-O-{alpha-Neu5Ac-(2-&gt;3)-beta-D-Gal-(1-&gt;3)-[alpha-Neu5Ac-(2-&gt;6)]-alpha-D-GalNAc}-L-threonyl-[protein] + CMP + H(+). It participates in protein modification; protein glycosylation. Functionally, protein sialyltransferase specifically expressed in goblet cells that plays a key role in intestinal host-commensal homeostasis. Conjugates sialic acid with an alpha-2-6 linkage to N-acetylgalactosamine (GalNAc) glycan chains linked to serine or threonine in glycoproteins. Generates sialylated T and Tn antigens.. The chain is Alpha-N-acetylgalactosaminide alpha-2,6-sialyltransferase 1 (ST6GALNAC1) from Gallus gallus (Chicken).